The sequence spans 164 residues: Heat shock protein beta-6 (164 aa).

The tract at residues 1 to 72 (MEIPVSVQPS…PTAQVSTDPG (72 aa)) is involved in stabilization of the HSPB1:HSBP6 heterodimer. At Ser16 the chain carries Phosphoserine. Positions 56-163 (RAPSVALPTA…PLQSPPGAAA (108 aa)) constitute a sHSP domain. Gln66 bears the Deamidated glutamine mark. Ser157 is modified (phosphoserine).

Belongs to the small heat shock protein (HSP20) family. Homodimer. Small heat shock proteins form high molecular mass oligomers containing variable number of monomers; these oligomers display a very flexible quaternary structure easily exchanging their subunits. Heterooligomer with HSPB1; formed through oligomerization of HSPB1:HSBP6 dimers; subunit exchange leads to formation of at least two different heterooligomeric complexes, differing in variable quantities of HSPB1 and HSPB6 homodimers in addition to HSPB1:HSPB6 heterodimers. Heterooligomer with CRYAB; large heterooligomers consist of CRYAB homodimers and HSPB5:HSPB6 heterodimers but lacking HSPB6 homodimers. Interacts with BAG3. Interacts (phosphorylated) with YWHAZ. Interacts with PDE4A and PDE4D; required for maintenance of the non-phosphorylated state of HSPB6 under basal conditions. Interacts with KDR. Interacts with PRKD1. Phosphorylated at Ser-16 by PKA and probably PKD1K; required to protect cardiomyocytes from apoptosis.

It localises to the cytoplasm. The protein localises to the nucleus. Its subcellular location is the secreted. Functionally, small heat shock protein which functions as a molecular chaperone probably maintaining denatured proteins in a folding-competent state. Seems to have versatile functions in various biological processes. Plays a role in regulating muscle function such as smooth muscle vasorelaxation and cardiac myocyte contractility. May regulate myocardial angiogenesis implicating KDR. Overexpression mediates cardioprotection and angiogenesis after induced damage. Stabilizes monomeric YWHAZ thereby supporting YWHAZ chaperone-like activity. The chain is Heat shock protein beta-6 (HSPB6) from Bos taurus (Bovine).